The primary structure comprises 372 residues: Delta-type opioid receptor (372 aa).

At 1–47 (MELVPSARAELQSSPLVNLSDAFPSAFPSAGANASGSPGARSASSLA) the chain is on the extracellular side. Residues Asn18 and Asn33 are each glycosylated (N-linked (GlcNAc...) asparagine). Residues 48 to 75 (LAIAITALYSAVCAVGLLGNVLVMFGIV) form a helical membrane-spanning segment. Residues 76–85 (RYTKLKTATN) are Cytoplasmic-facing. Residues 86–110 (IYIFNLALADALATSTLPFQSAKYL) traverse the membrane as a helical segment. At 111–122 (METWPFGELLCK) the chain is on the extracellular side. A disulfide bridge links Cys121 with Cys198. Residues 123 to 144 (AVLSIDYYNMFTSIFTLTMMSV) form a helical membrane-spanning segment. Residues 145-163 (DRYIAVCHPVKALDFRTPA) are Cytoplasmic-facing. Residues 164-186 (KAKLINICIWVLASGVGVPIMVM) traverse the membrane as a helical segment. The Extracellular portion of the chain corresponds to 187–206 (AVTQPRDGAVVCMLQFPSPS). The helical transmembrane segment at 207–238 (WYWDTVTKICVFLFAFVVPILIITVCYGLMLL) threads the bilayer. Over 239–261 (RLRSVRLLSGSKEKDRSLRRITR) the chain is Cytoplasmic. A helical transmembrane segment spans residues 262-284 (MVLVVVGAFVVCWAPIHIFVIVW). Over 285 to 299 (TLVDINRRDPLVVAA) the chain is Extracellular. A helical transmembrane segment spans residues 300 to 321 (LHLCIALGYANSSLNPVLYAFL). The Cytoplasmic portion of the chain corresponds to 322-372 (DENFKRCFRQLCRTPCGRQEPGSLRRPRQATTRERVTACTPSDGPGGGAAA). Cys333 carries S-palmitoyl cysteine lipidation. The tract at residues 340–372 (QEPGSLRRPRQATTRERVTACTPSDGPGGGAAA) is disordered.

The protein belongs to the G-protein coupled receptor 1 family. In terms of assembly, may form homooligomers. Forms a heterodimer with OPRM1. Interacts with GPRASP1. Interacts with RTP4; the interaction promotes cell surface localization of the OPRD1-OPRM1 heterodimer. Ubiquitinated. A basal ubiquitination seems not to be related to degradation. Ubiquitination is increased upon formation of OPRM1:OPRD1 oligomers leading to proteasomal degradation; the ubiquitination is diminished by RTP4. As to expression, brain, with high concentrations in the basal ganglia and limbic regions.

The protein resides in the cell membrane. In terms of biological role, G-protein coupled receptor that functions as a receptor for endogenous enkephalins and for a subset of other opioids. Ligand binding causes a conformation change that triggers signaling via guanine nucleotide-binding proteins (G proteins) and modulates the activity of down-stream effectors, such as adenylate cyclase. Signaling leads to the inhibition of adenylate cyclase activity. Inhibits neurotransmitter release by reducing calcium ion currents and increasing potassium ion conductance. Plays a role in the perception of pain and in opiate-mediated analgesia. Plays a role in developing analgesic tolerance to morphine. This is Delta-type opioid receptor (Oprd1) from Mus musculus (Mouse).